The chain runs to 113 residues: Hemerythrin (113 aa).

Fe cation contacts are provided by H25, H54, E58, H73, H77, H101, and D106.

It belongs to the hemerythrin family. Homotrimer.

Functionally, hemerythrin is a respiratory protein in blood cells of certain marine worms. The oxygen-binding site in each chain contains two iron atoms. The chain is Hemerythrin from Siphonosoma cumanense (Sipunculan worm).